The primary structure comprises 507 residues: Glucose-6-phosphate 1-dehydrogenase (507 aa).

NADP(+) is bound by residues arginine 57 and lysine 168. 4 residues coordinate substrate: histidine 198, lysine 202, glutamate 236, and aspartate 255. Catalysis depends on histidine 260, which acts as the Proton acceptor. Lysine 356 contributes to the substrate binding site.

It belongs to the glucose-6-phosphate dehydrogenase family.

The catalysed reaction is D-glucose 6-phosphate + NADP(+) = 6-phospho-D-glucono-1,5-lactone + NADPH + H(+). It functions in the pathway carbohydrate degradation; pentose phosphate pathway; D-ribulose 5-phosphate from D-glucose 6-phosphate (oxidative stage): step 1/3. Catalyzes the oxidation of glucose 6-phosphate to 6-phosphogluconolactone. This chain is Glucose-6-phosphate 1-dehydrogenase, found in Chlamydia muridarum (strain MoPn / Nigg).